The following is a 926-amino-acid chain: Alanine--tRNA ligase (926 aa).

Residues His577, His581, Cys680, and His684 each coordinate Zn(2+).

It belongs to the class-II aminoacyl-tRNA synthetase family. Zn(2+) is required as a cofactor.

Its subcellular location is the cytoplasm. It catalyses the reaction tRNA(Ala) + L-alanine + ATP = L-alanyl-tRNA(Ala) + AMP + diphosphate. In terms of biological role, catalyzes the attachment of alanine to tRNA(Ala) in a two-step reaction: alanine is first activated by ATP to form Ala-AMP and then transferred to the acceptor end of tRNA(Ala). Also edits incorrectly charged Ser-tRNA(Ala) and Gly-tRNA(Ala) via its editing domain. The sequence is that of Alanine--tRNA ligase from Methylacidiphilum infernorum (isolate V4) (Methylokorus infernorum (strain V4)).